We begin with the raw amino-acid sequence, 458 residues long: UDP-N-acetylmuramate--L-alanine ligase (458 aa).

Gly115–Thr121 contributes to the ATP binding site.

This sequence belongs to the MurCDEF family.

The protein resides in the cytoplasm. It catalyses the reaction UDP-N-acetyl-alpha-D-muramate + L-alanine + ATP = UDP-N-acetyl-alpha-D-muramoyl-L-alanine + ADP + phosphate + H(+). Its pathway is cell wall biogenesis; peptidoglycan biosynthesis. In terms of biological role, cell wall formation. The chain is UDP-N-acetylmuramate--L-alanine ligase from Anaeromyxobacter dehalogenans (strain 2CP-C).